The primary structure comprises 281 residues: Probable endonuclease 4 (281 aa).

9 residues coordinate Zn(2+): His-69, His-109, Glu-145, Asp-179, His-182, His-216, Asp-229, His-231, and Glu-261.

This sequence belongs to the AP endonuclease 2 family. Zn(2+) is required as a cofactor.

The enzyme catalyses Endonucleolytic cleavage to 5'-phosphooligonucleotide end-products.. Endonuclease IV plays a role in DNA repair. It cleaves phosphodiester bonds at apurinic or apyrimidinic (AP) sites, generating a 3'-hydroxyl group and a 5'-terminal sugar phosphate. This is Probable endonuclease 4 from Glaesserella parasuis serovar 5 (strain SH0165) (Haemophilus parasuis).